The sequence spans 438 residues: Chaperone SurA (438 aa).

Residues 1 to 28 (MKTMNPYIRHLILLICCLGGMLAQPLSA) form the signal peptide. 2 consecutive PpiC domains span residues 181 to 282 (EEEY…KLVS) and 292 to 390 (VQQT…QVLE).

The protein resides in the periplasm. The enzyme catalyses [protein]-peptidylproline (omega=180) = [protein]-peptidylproline (omega=0). Functionally, chaperone involved in the correct folding and assembly of outer membrane proteins. Recognizes specific patterns of aromatic residues and the orientation of their side chains, which are found more frequently in integral outer membrane proteins. May act in both early periplasmic and late outer membrane-associated steps of protein maturation. In Dechloromonas aromatica (strain RCB), this protein is Chaperone SurA.